Here is a 381-residue protein sequence, read N- to C-terminus: Alkanesulfonate monooxygenase (381 aa).

This sequence belongs to the SsuD family. In terms of assembly, homotetramer.

It carries out the reaction an alkanesulfonate + FMNH2 + O2 = an aldehyde + FMN + sulfite + H2O + 2 H(+). Functionally, catalyzes the desulfonation of aliphatic sulfonates. The chain is Alkanesulfonate monooxygenase from Escherichia coli O8 (strain IAI1).